The primary structure comprises 380 residues: Cytochrome b (380 aa).

4 consecutive transmembrane segments (helical) span residues 34–54 (FGSL…LLAM), 78–99 (WLLH…FLHI), 114–134 (WNTG…GYVL), and 179–199 (FFAL…IHLM). Heme b is bound by residues H84 and H98. Heme b contacts are provided by H183 and H197. Residue H202 coordinates a ubiquinone. 4 helical membrane passes run 227 to 247 (IKDI…TLFS), 289 to 309 (LGGV…PFLH), 321 to 341 (LSQT…WVGS), and 348 to 368 (FIII…ILFP).

This sequence belongs to the cytochrome b family. The cytochrome bc1 complex contains 11 subunits: 3 respiratory subunits (MT-CYB, CYC1 and UQCRFS1), 2 core proteins (UQCRC1 and UQCRC2) and 6 low-molecular weight proteins (UQCRH/QCR6, UQCRB/QCR7, UQCRQ/QCR8, UQCR10/QCR9, UQCR11/QCR10 and a cleavage product of UQCRFS1). This cytochrome bc1 complex then forms a dimer. It depends on heme b as a cofactor.

The protein localises to the mitochondrion inner membrane. Component of the ubiquinol-cytochrome c reductase complex (complex III or cytochrome b-c1 complex) that is part of the mitochondrial respiratory chain. The b-c1 complex mediates electron transfer from ubiquinol to cytochrome c. Contributes to the generation of a proton gradient across the mitochondrial membrane that is then used for ATP synthesis. In Meleagris gallopavo (Wild turkey), this protein is Cytochrome b (MT-CYB).